Here is a 212-residue protein sequence, read N- to C-terminus: MAYAYLFKYIIIGDTGVGKSCLLLQFTDKRFQPVHDLTIGVEFGARMITIDGKQIKLQIWDTAGQESFRSITRSYYRGAAGALLVYDITRRDTFNHLTTWLEDARQHSNSNMVIMLIGNKSDLESRREVKKEEGEAFAREHGLIFMETSAKTASNVEEAFINTAKEIYEKIQEGVFDINNEANGIKIGPQHAATNASHGSNQGGQQAGGGCC.

A2 is subject to N-acetylalanine. Residues 2 to 19 are required for interaction with PRKCI; the sequence is AYAYLFKYIIIGDTGVGK. GTP is bound by residues G16, V17, G18, K19, S20, C21, and T38. Position 20 (S20) interacts with Mg(2+). A Switch 1 motif is present at residues 37–42; sequence LTIGVE. The Mg(2+) site is built by T38 and D61. The short motif at 63-72 is the Switch 2 element; sequence AGQESFRSIT. GTP is bound by residues G64, N119, K120, D122, A150, and K151. Residues 190–212 are disordered; that stretch reads QHAATNASHGSNQGGQQAGGGCC. Gly residues predominate over residues 201 to 212; the sequence is NQGGQQAGGGCC. S-geranylgeranyl cysteine attachment occurs at residues C211 and C212.

It belongs to the small GTPase superfamily. Rab family. Interacts with PRKCI. Interacts with TRIP11. Interacts (in GTP-bound form) with GARIN1B. Interacts (GTP-bound) with HOPS complex component VPS39; interaction contributes to obtaining a functional HOPS complex that promotes autophagosome-lysosome membrane fusion driven by STX17-SNAP29-VAMP8. Interacts with VPS41. The cofactor is Mg(2+). Post-translationally, prenylated. Prenylation is required for association with cellular membranes.

The protein resides in the endoplasmic reticulum-Golgi intermediate compartment membrane. The protein localises to the melanosome. It is found in the endoplasmic reticulum membrane. It localises to the golgi apparatus membrane. Its subcellular location is the cytoplasmic vesicle. The protein resides in the secretory vesicle. The protein localises to the acrosome. It is found in the autophagosome membrane. The catalysed reaction is GTP + H2O = GDP + phosphate + H(+). With respect to regulation, regulated by guanine nucleotide exchange factors (GEFs) which promote the exchange of bound GDP for free GTP, GTPase activating proteins (GAPs) which increase the GTP hydrolysis activity, and GDP dissociation inhibitors (GDIs) which inhibit the dissociation of the nucleotide from the GTPase. In terms of biological role, the small GTPases Rab are key regulators of intracellular membrane trafficking, from the formation of transport vesicles to their fusion with membranes. Rabs cycle between active GTP-bound and inactive GDP-bound states. In their active state, drive transport of vesicular carriers from donor organelles to acceptor organelles to regulate the membrane traffic that maintains organelle identity and morphology. RAB2A regulates autophagy by promoting autophagosome-lysosome fusion via recruitment of the HOPS endosomal tethering complex; this process involves autophagosomal RAB2A and lysosomal RAB39A recruitment of HOPS subcomplexes VPS39-VPS11 and VPS41-VPS16-VPS18-VPS33A, respectively, which assemble into a functional complex to mediate membrane tethering and SNAREs-driven membrane fusion. Required for protein transport from the endoplasmic reticulum to the Golgi complex. Regulates the compacted morphology of the Golgi. Together with RAB2B, redundantly required for efficient autophagic flux. The protein is Ras-related protein Rab-2A of Mus musculus (Mouse).